The sequence spans 249 residues: Small ribosomal subunit protein uS3 (249 aa).

One can recognise a KH type-2 domain in the interval 39-108; the sequence is IRQLINKKLA…TVAVNVAEIP (70 aa). The disordered stretch occupies residues 214–249; it reads ETFARPQRRDRDERRPEGGDRPARRRPTARRRTGGE. The span at 220–235 shows a compositional bias: basic and acidic residues; that stretch reads QRRDRDERRPEGGDRP. The segment covering 236–249 has biased composition (basic residues); the sequence is ARRRPTARRRTGGE.

This sequence belongs to the universal ribosomal protein uS3 family. Part of the 30S ribosomal subunit. Forms a tight complex with proteins S10 and S14.

Binds the lower part of the 30S subunit head. Binds mRNA in the 70S ribosome, positioning it for translation. This chain is Small ribosomal subunit protein uS3, found in Deinococcus radiodurans (strain ATCC 13939 / DSM 20539 / JCM 16871 / CCUG 27074 / LMG 4051 / NBRC 15346 / NCIMB 9279 / VKM B-1422 / R1).